The primary structure comprises 106 residues: Nucleoid-associated protein Nwi_0368 (106 aa).

The protein belongs to the YbaB/EbfC family. As to quaternary structure, homodimer.

Its subcellular location is the cytoplasm. The protein localises to the nucleoid. Its function is as follows. Binds to DNA and alters its conformation. May be involved in regulation of gene expression, nucleoid organization and DNA protection. The protein is Nucleoid-associated protein Nwi_0368 of Nitrobacter winogradskyi (strain ATCC 25391 / DSM 10237 / CIP 104748 / NCIMB 11846 / Nb-255).